Here is a 340-residue protein sequence, read N- to C-terminus: S-adenosylmethionine:tRNA ribosyltransferase-isomerase (340 aa).

It belongs to the QueA family. As to quaternary structure, monomer.

The protein localises to the cytoplasm. It catalyses the reaction 7-aminomethyl-7-carbaguanosine(34) in tRNA + S-adenosyl-L-methionine = epoxyqueuosine(34) in tRNA + adenine + L-methionine + 2 H(+). It participates in tRNA modification; tRNA-queuosine biosynthesis. Its function is as follows. Transfers and isomerizes the ribose moiety from AdoMet to the 7-aminomethyl group of 7-deazaguanine (preQ1-tRNA) to give epoxyqueuosine (oQ-tRNA). The sequence is that of S-adenosylmethionine:tRNA ribosyltransferase-isomerase from Macrococcus caseolyticus (strain JCSC5402) (Macrococcoides caseolyticum).